A 374-amino-acid chain; its full sequence is 12-oxophytodienoate reductase 2 (374 aa).

Met-1 carries the N-acetylmethionine modification. FMN-binding positions include 33 to 35, Ala-66, and Gln-108; that span reads PLT. His-185 lines the substrate pocket. Tyr-190 acts as the Proton donor in catalysis. Arg-237 is a binding site for FMN. Residue Arg-277 participates in substrate binding. FMN-binding positions include 305-307 and 328-329; these read AGG and GR.

It belongs to the NADH:flavin oxidoreductase/NADH oxidase family. FMN serves as cofactor. As to expression, expressed at highest levels in roots and cotyledons, and at lower levels in leaves, shoots and flowers (sepals, petals, maturing siliques and developing pollen).

It is found in the cytoplasm. It carries out the reaction (1S,2S)-OPC-8 + NADP(+) = (9S,13S,15Z)-12-oxophyto-10,15-dienoate + NADPH + H(+). It catalyses the reaction a 4,5-didehydrojasmonate + NADPH + H(+) = a jasmonate + NADP(+). It participates in lipid metabolism; oxylipin biosynthesis. In terms of biological role, specifically cleaves olefinic bonds in alpha,beta-unsaturated carbonyls and may be involved in detoxification or modification of these reactive compounds. May be involved in the biosynthesis or metabolism of oxylipin signaling molecules. In vitro, reduces 9R,13R-12-oxophytodienoic acid (9R,13R-OPDA) to 9R,13R-OPC-8:0, but only poorly 9S,13S-OPDA, the natural precursor of jasmonic acid (JA). Can detoxify the explosive 2,4,6-trinitrotoluene (TNT) in vitro and in vivo by catalyzing its nitroreduction to form hydroxylamino-dinitrotoluene (HADNT). Functions in an alternative and OPR3-independent pathway for JA biosynthesis. Catalyzes the NADPH-dependent reduction of 4,5-didehydrojasmonates to jasmonates. The sequence is that of 12-oxophytodienoate reductase 2 from Arabidopsis thaliana (Mouse-ear cress).